Reading from the N-terminus, the 294-residue chain is Zinc finger protein CONSTANS-LIKE 3 (294 aa).

Cys-8, Cys-11, Cys-31, His-36, Cys-51, Cys-54, Cys-74, and His-79 together coordinate Zn(2+). The B box-type 1; atypical zinc finger occupies 8 to 50; it reads CDSCKSTAATLFCRADAAFLCGDCDGKIHTANKLASRHERVWL. A B box-type 2; atypical zinc finger spans residues 51-93; it reads CEVCEQAPAHVTCKADAAALCVTCDRDIHSANPLSRRHERVPI. In terms of domain architecture, CCT spans 229 to 271; sequence REARVLRYREKRKNRKFEKTIRYASRKAYAEMRPRIKGRFAKR.

It belongs to the CONSTANS family.

It is found in the nucleus. This chain is Zinc finger protein CONSTANS-LIKE 3 (COL3), found in Arabidopsis thaliana (Mouse-ear cress).